The chain runs to 177 residues: Early nodulin-like protein 15 (177 aa).

An N-terminal signal peptide occupies residues 1-24; the sequence is MASSSLLVTIFLCISVFFFSSVNA. The region spanning 25 to 129 is the Phytocyanin domain; that stretch reads NEVTVGGKSG…GQKLRLVVIT (105 aa). Cysteine 83 and cysteine 117 form a disulfide bridge. Residue asparagine 84 is glycosylated (N-linked (GlcNAc...) asparagine). Serine 153 is lipidated: GPI-anchor amidated serine. Residues 154–177 constitute a propeptide, removed in mature form; the sequence is GAAKLAGGFSVVFGLVLGLWAFFF.

Belongs to the early nodulin-like (ENODL) family. Mostly expressed in seedlings, siliques and flowers, and, to a lower extent, in roots, stems and seeds, but barely in leaves.

Its subcellular location is the cell membrane. May act as a carbohydrate transporter. Required, together with ENODL11, ENODL12, ENODL13, ENODL14 and ENODL15, for male-female communication and pollen tube reception and burst at the synergid cell surface of the female gametophyte. The polypeptide is Early nodulin-like protein 15 (Arabidopsis thaliana (Mouse-ear cress)).